The following is a 321-amino-acid chain: Serine/threonine-protein phosphatase PP1 (321 aa).

Mn(2+) is bound by residues Asp-60, His-62, Asp-88, and Asn-120. His-121 serves as the catalytic Proton donor. Positions 169 and 244 each coordinate Mn(2+). The interval 298 to 321 (KKLTNDSNGRPLTPPRNKQQKPKK) is disordered.

The protein belongs to the PPP phosphatase family. Interacts with dpiA. Requires Mn(2+) as cofactor.

It carries out the reaction O-phospho-L-seryl-[protein] + H2O = L-seryl-[protein] + phosphate. It catalyses the reaction O-phospho-L-threonyl-[protein] + H2O = L-threonyl-[protein] + phosphate. Inhibited by okadaic acid, tautomycin and calyculin A. Inhibited by phosphatase inhibitor 2 (dpiA). In terms of biological role, protein phosphatase activity in vitro. This is Serine/threonine-protein phosphatase PP1 (pppB) from Dictyostelium discoideum (Social amoeba).